The primary structure comprises 89 residues: Small ribosomal subunit protein uS15 (89 aa).

The protein belongs to the universal ribosomal protein uS15 family. Part of the 30S ribosomal subunit. Forms a bridge to the 50S subunit in the 70S ribosome, contacting the 23S rRNA.

Functionally, one of the primary rRNA binding proteins, it binds directly to 16S rRNA where it helps nucleate assembly of the platform of the 30S subunit by binding and bridging several RNA helices of the 16S rRNA. Forms an intersubunit bridge (bridge B4) with the 23S rRNA of the 50S subunit in the ribosome. The polypeptide is Small ribosomal subunit protein uS15 (Dechloromonas aromatica (strain RCB)).